A 364-amino-acid chain; its full sequence is Chorismate synthase (364 aa).

Arginine 47 contributes to the NADP(+) binding site. FMN is bound by residues 125–127 (RFS), glycine 285, 300–304 (KPTPS), and arginine 327.

The protein belongs to the chorismate synthase family. Homotetramer. It depends on FMNH2 as a cofactor.

The catalysed reaction is 5-O-(1-carboxyvinyl)-3-phosphoshikimate = chorismate + phosphate. It functions in the pathway metabolic intermediate biosynthesis; chorismate biosynthesis; chorismate from D-erythrose 4-phosphate and phosphoenolpyruvate: step 7/7. Its function is as follows. Catalyzes the anti-1,4-elimination of the C-3 phosphate and the C-6 proR hydrogen from 5-enolpyruvylshikimate-3-phosphate (EPSP) to yield chorismate, which is the branch point compound that serves as the starting substrate for the three terminal pathways of aromatic amino acid biosynthesis. This reaction introduces a second double bond into the aromatic ring system. This is Chorismate synthase from Dehalococcoides mccartyi (strain ATCC BAA-2100 / JCM 16839 / KCTC 5957 / BAV1).